We begin with the raw amino-acid sequence, 540 residues long: Cobalt-factor III methyltransferase (540 aa).

4 residues coordinate [4Fe-4S] cluster: Cys-402, Cys-405, Cys-439, and Cys-443.

The protein in the N-terminal section; belongs to the precorrin methyltransferase family. It depends on [4Fe-4S] cluster as a cofactor.

The catalysed reaction is Co(II)-factor III + AH2 + S-adenosyl-L-methionine = Co-precorrin-4 + A + S-adenosyl-L-homocysteine. It functions in the pathway cofactor biosynthesis; adenosylcobalamin biosynthesis. Methyltransferase that catalyzes the reduction, ring contraction and methylation of C-17 in cobalt-factor III to form cobalt-precorrin-4. Is also able to convert cobalt-precorrin-3 to cobalt-precorrin-4. This Priestia megaterium (Bacillus megaterium) protein is Cobalt-factor III methyltransferase (cbiH60).